We begin with the raw amino-acid sequence, 1331 residues long: DNA replication ATP-dependent helicase/nuclease JHS1 (1331 aa).

Positions 1–98 (MPPRKKPKSS…DMDQQLTEAS (98 aa)) are disordered. The Nuclear localization signal motif lies at 2–8 (PPRKKPK). Over residues 11 to 31 (ALKSNKQSSANHSSQPSTFGI) the composition is skewed to polar residues. Residues 40 to 52 (QNSQSTSNSHTST) are compositionally biased toward low complexity. The segment covering 57–81 (DQQNVNGLASDTAVLTPQNPLGTSN) has biased composition (polar residues). Positions 82–91 (EKPDESKDMD) are enriched in basic and acidic residues. The nuclease activity stretch occupies residues 362–811 (ECALYLWDEW…CKLRTGDRVI (450 aa)). [4Fe-4S] cluster-binding residues include C422, C666, C669, and C675. The helicase activity stretch occupies residues 812-1331 (LRTEVSHLTV…LNLLPGDLKP (520 aa)). The region spanning 924-1271 (NNDQRQAILK…VRSREKPRSS (348 aa)) is the UvrD-like helicase ATP-binding domain. Position 945–952 (945–952 (GMPGTGKT)) interacts with ATP.

This sequence belongs to the DNA2/NAM7 helicase family. Requires [4Fe-4S] cluster as cofactor. Strongly expressed in meristems, including both root and shoot apical meristems (RAM and SAM). Also present in the vasculature and in young floral tissues.

Its subcellular location is the nucleus. It is found in the chromosome. It carries out the reaction ATP + H2O = ADP + phosphate + H(+). Essential protein required during embryogenesis. Key enzyme involved in DNA replication and damage repair, shoot apical meristem (SAM) maintenance, and development. Involved in Okazaki fragments processing. Possesses different enzymatic activities, such as single-stranded DNA (ssDNA)-dependent ATPase, 5'-3' helicase and endonuclease activities. While the ATPase and endonuclease activities are well-defined and play a key role in Okazaki fragments processing and DSB repair, the 5'-3' DNA helicase activity is atypical: it cannot load onto its tracking strand internally and has an absolute free 5'-end requirement. This chain is DNA replication ATP-dependent helicase/nuclease JHS1, found in Arabidopsis thaliana (Mouse-ear cress).